The following is a 226-amino-acid chain: Leucyl/phenylalanyl-tRNA--protein transferase (226 aa).

This sequence belongs to the L/F-transferase family.

It is found in the cytoplasm. The catalysed reaction is N-terminal L-lysyl-[protein] + L-leucyl-tRNA(Leu) = N-terminal L-leucyl-L-lysyl-[protein] + tRNA(Leu) + H(+). It catalyses the reaction N-terminal L-arginyl-[protein] + L-leucyl-tRNA(Leu) = N-terminal L-leucyl-L-arginyl-[protein] + tRNA(Leu) + H(+). The enzyme catalyses L-phenylalanyl-tRNA(Phe) + an N-terminal L-alpha-aminoacyl-[protein] = an N-terminal L-phenylalanyl-L-alpha-aminoacyl-[protein] + tRNA(Phe). Its function is as follows. Functions in the N-end rule pathway of protein degradation where it conjugates Leu, Phe and, less efficiently, Met from aminoacyl-tRNAs to the N-termini of proteins containing an N-terminal arginine or lysine. This Pseudomonas fluorescens (strain Pf0-1) protein is Leucyl/phenylalanyl-tRNA--protein transferase.